The primary structure comprises 434 residues: Beta-enolase (434 aa).

Alanine 2 is modified (N-acetylalanine). Position 72 is a phosphothreonine (threonine 72). Phosphoserine is present on residues serine 83 and serine 157. Residues histidine 158 and glutamate 167 each contribute to the substrate site. Serine 176 carries the phosphoserine modification. Position 205 is a phosphothreonine (threonine 205). The active-site Proton donor is glutamate 210. Threonine 229 carries the phosphothreonine modification. Phosphotyrosine is present on tyrosine 236. Aspartate 245 is a Mg(2+) binding site. Phosphoserine is present on serine 263. Residues glutamate 293 and aspartate 318 each coordinate substrate. Residues glutamate 293 and aspartate 318 each contribute to the Mg(2+) site. The active-site Proton acceptor is the lysine 343. Substrate is bound by residues 370–373 (SHRS) and lysine 394.

It belongs to the enolase family. In terms of assembly, mammalian enolase is composed of 3 isozyme subunits, alpha, beta and gamma, which can form homodimers or heterodimers which are cell-type and development-specific. Interacts with PNKD. It depends on Mg(2+) as a cofactor. In terms of tissue distribution, the alpha/alpha homodimer is expressed in embryo and in most adult tissues. The alpha/beta heterodimer and the beta/beta homodimer are found in striated muscle, and the alpha/gamma heterodimer and the gamma/gamma homodimer in neurons.

The protein localises to the cytoplasm. The catalysed reaction is (2R)-2-phosphoglycerate = phosphoenolpyruvate + H2O. The protein operates within carbohydrate degradation; glycolysis; pyruvate from D-glyceraldehyde 3-phosphate: step 4/5. In terms of biological role, glycolytic enzyme that catalyzes the conversion of 2-phosphoglycerate to phosphoenolpyruvate. Appears to have a function in striated muscle development and regeneration. The polypeptide is Beta-enolase (ENO3) (Oryctolagus cuniculus (Rabbit)).